A 188-amino-acid polypeptide reads, in one-letter code: Peptidyl-tRNA hydrolase (188 aa).

TRNA is bound at residue Phe-15. The active-site Proton acceptor is His-20. TRNA contacts are provided by Tyr-64, Asn-66, and Asn-112.

The protein belongs to the PTH family. In terms of assembly, monomer.

It is found in the cytoplasm. It carries out the reaction an N-acyl-L-alpha-aminoacyl-tRNA + H2O = an N-acyl-L-amino acid + a tRNA + H(+). Hydrolyzes ribosome-free peptidyl-tRNAs (with 1 or more amino acids incorporated), which drop off the ribosome during protein synthesis, or as a result of ribosome stalling. Its function is as follows. Catalyzes the release of premature peptidyl moieties from peptidyl-tRNA molecules trapped in stalled 50S ribosomal subunits, and thus maintains levels of free tRNAs and 50S ribosomes. This chain is Peptidyl-tRNA hydrolase, found in Borrelia duttonii (strain Ly).